The chain runs to 686 residues: Chromatin modification-related protein EAF1 (686 aa).

The tract at residues 71 to 97 (QMKRRQNDHHNQGPPPKVQKSTVDSLK) is disordered. In terms of domain architecture, HSA spans 202-280 (FKFIRKSKKK…DKSIIRNLPV (79 aa)). Residues 354 to 418 (IPTIWLPEDD…FERYIQLNDK (65 aa)) enclose the Myb-like domain. Disordered regions lie at residues 493-517 (RKST…RIPT), 544-617 (ARMV…QQRR), and 657-686 (QQGY…PNNA). A compositionally biased stretch (polar residues) spans 497 to 506 (AELQANQNVT). Pro residues predominate over residues 554 to 568 (APAPAPAPPPPPPPK). Residues 574–588 (TTPNGTPLTNEQIQH) are compositionally biased toward polar residues. Over residues 599–613 (LQQQQQQQQQQQHQQ) the composition is skewed to low complexity. Residues 671-686 (QKNQTASPMSGSPNNA) show a composition bias toward polar residues.

It belongs to the EAF1 family. Component of the NuA4 histone acetyltransferase complex.

It is found in the nucleus. Functionally, component of the NuA4 histone acetyltransferase complex which is involved in transcriptional activation of selected genes principally by acetylation of nucleosomal histone H4 and H2A. The NuA4 complex is also involved in DNA repair. In Candida albicans (strain SC5314 / ATCC MYA-2876) (Yeast), this protein is Chromatin modification-related protein EAF1 (VID21).